The primary structure comprises 418 residues: Putative ion-transport protein YfeO (418 aa).

The next 12 helical transmembrane spans lie at 10–30, 54–74, 99–119, 120–140, 149–169, 186–206, 223–243, 258–278, 300–320, 322–342, 343–363, and 371–391; these read LLLSLPAVAIGIASSLILIVV, DSPIWIIGVLTLTGIAVGLVI, ALPGLIVALILGLAGGVSLGP, EHPIMTVNIALAVAIGARLLP, ILASAGTIGALFGTPVAAALI, LFAPLMAAAAGALTTGLFFHP, ILSGAIVAAIAIAAGMVAVWC, VLVLGIGGFILGILGVIGGPV, DYFLLAVIKLAALVVAAASGF, GGRIFPAVFVGVALGLMLHEH, VPAVPAAITVSCAILGIVLVV, and LFMAAVVVPNTTLLPLLCIVM.

It belongs to the chloride channel (TC 2.A.49) family.

It is found in the cell membrane. The sequence is that of Putative ion-transport protein YfeO from Shigella sonnei (strain Ss046).